A 355-amino-acid chain; its full sequence is Inositol polyphosphate multikinase (355 aa).

M1 carries the post-translational modification N-acetylmethionine. ATP is bound at residue K31. Position 97 is a phosphoserine (S97). Residues 118–120 (ENL) and D131 each bind ATP. 127–135 (PNILDIKLG) is a substrate binding site. Residues E271 and N274 each contribute to the Ca(2+) site. The segment covering 284-304 (FIDDDDDDDDNDDDDDDDAEG) has biased composition (acidic residues). Residues 284 to 317 (FIDDDDDDDDNDDDDDDDAEGSSEGPKDKKTTGS) form a disordered region. Position 325 (D325) interacts with ATP. G334 is a binding site for Ca(2+).

Belongs to the inositol phosphokinase (IPK) family. Interacts with ARG80 and MCM1. Ca(2+) is required as a cofactor.

It localises to the nucleus. The catalysed reaction is 1D-myo-inositol 1,4,5-trisphosphate + 2 ATP = 1D-myo-inositol 1,3,4,5,6-pentakisphosphate + 2 ADP + 2 H(+). The enzyme catalyses 1D-myo-inositol 1,4,5-trisphosphate + ATP = 1D-myo-inositol 1,4,5,6-tetrakisphosphate + ADP + H(+). It carries out the reaction 1D-myo-inositol 1,4,5-trisphosphate + ATP = 1D-myo-inositol 1,3,4,5-tetrakisphosphate + ADP + H(+). It catalyses the reaction 1D-myo-inositol 1,4,5,6-tetrakisphosphate + ATP = 1D-myo-inositol 1,3,4,5,6-pentakisphosphate + ADP + H(+). The catalysed reaction is a 1,2-diacyl-sn-glycero-3-phospho-(1D-myo-inositol-4,5-bisphosphate) + ATP = a 1,2-diacyl-sn-glycero-3-phospho-(1D-myo-inositol-3,4,5-trisphosphate) + ADP + H(+). Functionally, inositol phosphate kinase with both monophosphoinositol and diphosphoinositol polyphosphate synthase activities. Able to phosphorylate inositol 1,4,5-trisphosphate (Ins(1,4,5)P3) on both the carbon-3 and carbon-6 positions to synthesize inositol 1,3,4,5-tetrakisphosphate (Ins(1,3,4,5)P4) and inositol 1,4,5,6-tetrakisphosphate (Ins(1,4,5,6)P4), and then to subsequently phosphorylate and convert either isomer of InsP4 to inositol 1,3,4,5,6-pentakisphosphate (Ins(1,3,4,5,6)P5). Its predominant in vivo catalytic function is to convert Ins(1,4,5)P3 to Ins(1,4,5,6)P4 to Ins(1,3,4,5,6)P5 via 6- and 3-kinase activities. It can also use Ins(1,3,4,5,6)P5 as a substrate and act as a diphosphoinositol polyphosphate synthase to generate two different isomers of PP-InsP4. Also has a role in transcription regulation. Forms a complex with ARG80, ARG81 and MCM1 (ArgR-MCM1), which coordinates the expression of arginine anabolic and catabolic genes in response to arginine. Recruits ARG80 and MCM21 to stabilize them. Neither the kinase activity nor inositol phosphates are required for the formation of ArgR-MCM1 transcriptional complexes on DNA promoter elements and the control of arginine metabolism. In contrast, only the catalytic activity is required for PHO gene repression by phosphate and for NCR gene activation in response to nitrogen availability, indicating a role for inositol pyrophosphates in these controls. Inositol polyphosphates may be involved in the regulation of chromatin remodeling of transcription. Regulates nuclear mRNA export via inositol phosphate metabolism. Also has lipid kinase activity, transforming the lipid inositol phosphatidylinositol 4,5-bisphosphate (PI(4,5)P2) into phosphatidylinositol 3,4,5-trisphosphate (PI(3,4,5)P3) in the nucleus. Its kinase activity is necessary for the propagation of most [PSI+] prion variants. The polypeptide is Inositol polyphosphate multikinase (ARG82) (Saccharomyces cerevisiae (strain ATCC 204508 / S288c) (Baker's yeast)).